Consider the following 267-residue polypeptide: Indole-3-glycerol phosphate synthase 1 (267 aa).

This sequence belongs to the TrpC family.

The enzyme catalyses 1-(2-carboxyphenylamino)-1-deoxy-D-ribulose 5-phosphate + H(+) = (1S,2R)-1-C-(indol-3-yl)glycerol 3-phosphate + CO2 + H2O. Its pathway is amino-acid biosynthesis; L-tryptophan biosynthesis; L-tryptophan from chorismate: step 4/5. In Ralstonia nicotianae (strain ATCC BAA-1114 / GMI1000) (Ralstonia solanacearum), this protein is Indole-3-glycerol phosphate synthase 1 (trpC1).